The primary structure comprises 245 residues: tRNA (guanine-N(1)-)-methyltransferase (245 aa).

Residues glycine 112 and 132–137 (IGDFVL) contribute to the S-adenosyl-L-methionine site.

This sequence belongs to the RNA methyltransferase TrmD family. As to quaternary structure, homodimer.

The protein resides in the cytoplasm. It carries out the reaction guanosine(37) in tRNA + S-adenosyl-L-methionine = N(1)-methylguanosine(37) in tRNA + S-adenosyl-L-homocysteine + H(+). Its function is as follows. Specifically methylates guanosine-37 in various tRNAs. The polypeptide is tRNA (guanine-N(1)-)-methyltransferase (Geobacter metallireducens (strain ATCC 53774 / DSM 7210 / GS-15)).